A 508-amino-acid chain; its full sequence is MSRFVQDLSKAMSQDGASQFQEVIRQELELSVKKELEKILTTASSHEFEHTKKDLDGFRKLFHRFLQEKGPSVDWGKIQRPPEDSIQPYEKIKARGLPDNISSVLNKLVVVKLNGGLGTSMGCKGPKSLIGVRNENTFLDLTVQQIEHLNKTYNTDVPLVLMNSFNTDEDTKKILQKYNHCRVKIYTFNQSRYPRINKESLLPVAKDVSYSGENTEAWYPPGHGDIYASFYNSGLLDTFIGEGKEYIFVSNIDNLGATVDLYILNHLMNPPNGKRCEFVMEVTNKTRADVKGGTLTQYEGKLRLVEIAQVPKAHVDEFKSVSKFKIFNTNNLWISLAAVKRLQEQNAIDMEIIVNAKTLDGGLNVIQLETAVGAAIKSFENSLGINVPRSRFLPVKTTSDLLLVMSNLYSLNAGSLTMSEKREFPTVPLVKLGSSFTKVQDYLRRFESIPDMLELDHLTVSGDVTFGKNVSLKGTVIIIANHGDRIDIPPGAVLENKIVSGNLRILDH.

S2 carries the post-translational modification N-acetylserine. A phosphoserine mark is found at S2 and S13. UTP contacts are provided by residues L113–G116, K127, Q190, and G222. G115–G116 contributes to the substrate binding site. Residue K127 coordinates Mg(2+). Residues H223, N251–D253, and N330 contribute to the substrate site. D253 is a binding site for UTP. Residue D253 coordinates Mg(2+). K396 is a UTP binding site. Residue K396 is part of the active site. T426 carries the phosphothreonine modification. S434 carries the post-translational modification Phosphoserine. K438 carries the N6-acetyllysine modification. S448 and S461 each carry phosphoserine. An oligomerization region spans residues H457 to H508. Positions N502–L503 are critical for end-to-end subunit interaction.

Belongs to the UDPGP type 1 family. As to quaternary structure, homooctamer. As to expression, highly expressed in various brain regions. Expressed in amygdala, anterior cingulate cortex, caudate, cerebellar hemisphere, cerebellum, cortex, frontal cortex, hippocampus, hypothalamus, nucleus accumbens, putamen, spinal cord and substantia nigra. Also widely expressed among other tissues, including liver, heart, placenta, lung, kidney, pancreas and skeletal muscle.

It localises to the cytoplasm. The enzyme catalyses alpha-D-glucose 1-phosphate + UTP + H(+) = UDP-alpha-D-glucose + diphosphate. It participates in glycan biosynthesis; glycogen biosynthesis. Functionally, UTP--glucose-1-phosphate uridylyltransferase catalyzing the conversion of glucose-1-phosphate into UDP-glucose, a crucial precursor for the production of glycogen. In Homo sapiens (Human), this protein is UTP--glucose-1-phosphate uridylyltransferase.